The following is a 380-amino-acid chain: Alcohol dehydrogenase 1 (380 aa).

8 residues coordinate Zn(2+): C48, T50, H70, C100, C103, C106, C114, and C178. Positions 50 and 70 each coordinate an alcohol. Position 50 (T50) interacts with NAD(+). NAD(+)-binding positions include 203–208, D227, R232, T273, V296, 296–298, and R373; these read GLGAVG and VGV.

Belongs to the zinc-containing alcohol dehydrogenase family. Homodimer. It depends on Zn(2+) as a cofactor.

It is found in the cytoplasm. It catalyses the reaction a primary alcohol + NAD(+) = an aldehyde + NADH + H(+). The catalysed reaction is a secondary alcohol + NAD(+) = a ketone + NADH + H(+). This chain is Alcohol dehydrogenase 1, found in Pisum sativum (Garden pea).